We begin with the raw amino-acid sequence, 138 residues long: Large ribosomal subunit protein uL16 (138 aa).

This sequence belongs to the universal ribosomal protein uL16 family. In terms of assembly, part of the 50S ribosomal subunit.

Its function is as follows. Binds 23S rRNA and is also seen to make contacts with the A and possibly P site tRNAs. This is Large ribosomal subunit protein uL16 from Chlamydia pneumoniae (Chlamydophila pneumoniae).